The primary structure comprises 773 residues: MSSPAVARTSPGGSREMAPAPQGRGRFWEVGGGSGHRLERAAAESERWELLLRRGELLALGGHLKGALEAFAAALRRGAPARPECLGALVDCLVFNYRLRHGLGWSAAPVAGADGGAGGLLRCLGCRGFLSEPVTVPCGHSYCRRCLRRELRARCRLCRDRLPPATASATDAEGTAPRPPPLAAAIAASDFRTSVVLNHLAEKWFPGQRERARAAGRLGELLHQGRYREALAAACEALRAEPSDLIVKIYRAESYAGLQEFKAAIEDLNAVLFQLPDWPEVYFRKGKVLCDAGFLGDALQLFLQCLALDEDFAPAKLQVQKILCDLLLPENLKEGLKESSWSSLPCTKNRPFDFHSVMEESQSLNEPSPKQSEEIPEVTSEPVKGSLNRAQSAQSINSTEMPAREDCLKRVSSEPVLSVQEKGVLLKRKLSLLEQDVIVNEDGRNKLKKQGETPNEVCMFSLAYGDIPEELIDVSDFECSLCMRLFFEPVTTPCGHSFCKNCLERCLDHAPYCPLCKESLKEYLADRRYCVTQLLEELIVKYLPDELSERKKIYDEETAELSHLTKNVPIFVCTMAYPTVPCPLHVFEPRYRLMIRRSIQTGTKQFGMCVSDTQNSFADYGCMLQIRNVHFLPDGRSVVDTVGGKRFRVLKRGMKDGYCTADIEYLEDVKVENEDEIKNLRELHDLVYSQACSWFQNLRDRFRSQILQHFGSMPEREENLQAAPNGPAWCWWLLAVLPVDPRYQLSVLSMKSLKERLTKIQHILTYFSRDQSK.

The interval 1–29 (MSSPAVARTSPGGSREMAPAPQGRGRFWE) is disordered. The stretch at 48 to 81 (WELLLRRGELLALGGHLKGALEAFAAALRRGAPA) is one TPR 1 repeat. The segment at 123 to 159 (CLGCRGFLSEPVTVPCGHSYCRRCLRRELRARCRLCR) adopts an RING-type 1 zinc-finger fold. 3 TPR repeats span residues 212-244 (ARAA…EPSD), 246-278 (IVKI…LPDW), and 279-312 (PEVY…DEDF). Residues 359 to 370 (EESQSLNEPSPK) show a composition bias toward polar residues. A disordered region spans residues 359–388 (EESQSLNEPSPKQSEEIPEVTSEPVKGSLN). Residue Ser-431 is modified to Phosphoserine. The RING-type 2 zinc-finger motif lies at 479–517 (CSLCMRLFFEPVTTPCGHSFCKNCLERCLDHAPYCPLCK). In terms of domain architecture, Lon N-terminal spans 558-768 (TAELSHLTKN…KIQHILTYFS (211 aa)).

This is LON peptidase N-terminal domain and RING finger protein 1 (LONRF1) from Homo sapiens (Human).